The chain runs to 62 residues: Mastoparan-AF (62 aa).

A signal peptide spans 1 to 25; sequence MKNTILILFTAFIALLGFFGMSAEA. 4 AXPX repeats span residues 25-28, 29-32, 33-36, and 43-46; these read ADPI and ADPE. A propeptide spanning residues 26–47 is cleaved from the precursor; sequence DPIADPIADPISGPNAEADPEA. F61 carries the phenylalanine amide modification.

It belongs to the MCD family. Mastoparan subfamily. As to expression, expressed by the venom gland.

It is found in the secreted. Its subcellular location is the target cell membrane. Its function is as follows. Antimicrobial and mast cell degranulating peptide. Has broad spectrum antibacterial activity against both Gram-positive and Gram-negative bacteria (S.aureus MIC=16-32 ug/ml, S.xylosus MIC=1.5 ug/ml, S.alactolyticus MIC=8 ug/ml, C.koseri MIC=4 ug/ml, E.coli MIC=4-32 ug/ml, K.pneumoniae MIC=32 ug/ml, P.aerugiosa MIC=96 ug/ml, S.choleraesuis MIC=16 ug/ml, S.typhimurium MIC=32 ug/ml, V.parahamelytics MIC=16 ug/ml). Is also active on multi-antibiotic resistant hemolytic E.coli O157:H7. Acts by affecting membrane permeability. On E.coli O157:H7, acts through multiple membrane disruption patterns, including large perforations (full opening) at apical ends (hollow tubes), vesicle budding, forming dents, and membrane corrugation and invagination leading to irregular pits or pores. Exerts 40% lower membrane permeabilization activities on E.coli O157:H7 than on the non-pathogen E.coli BL21. Shows little hemolytic activities on sheep, chicken and human erythrocytes, but with a higher activity on chicken erythrocytes. Its mast cell degranulation activity may be related to the activation of G-protein coupled receptors in mast cells as well as interaction with other proteins located in cell endosomal membranes in the mast cells. This chain is Mastoparan-AF, found in Vespa affinis (Lesser banded hornet).